A 246-amino-acid chain; its full sequence is Purine nucleoside phosphorylase ORF3 (246 aa).

Residues His71, Cys110, and His127 each contribute to the Zn(2+) site.

This sequence belongs to the purine nucleoside phosphorylase YfiH/LACC1 family. In terms of assembly, homodimer. The cofactor is Cu(2+). Requires Zn(2+) as cofactor.

It catalyses the reaction adenosine + phosphate = alpha-D-ribose 1-phosphate + adenine. It carries out the reaction S-methyl-5'-thioadenosine + phosphate = 5-(methylsulfanyl)-alpha-D-ribose 1-phosphate + adenine. The enzyme catalyses inosine + phosphate = alpha-D-ribose 1-phosphate + hypoxanthine. The catalysed reaction is adenosine + H2O + H(+) = inosine + NH4(+). Purine nucleoside enzyme that catalyzes the phosphorolysis of adenosine and inosine nucleosides, yielding D-ribose 1-phosphate and the respective free bases, adenine and hypoxanthine. Also catalyzes the phosphorolysis of S-methyl-5'-thioadenosine into adenine and S-methyl-5-thio-alpha-D-ribose 1-phosphate. Also has adenosine deaminase activity. The protein is Purine nucleoside phosphorylase ORF3 of Streptomyces griseus.